Here is a 118-residue protein sequence, read N- to C-terminus: RNA guanine-N7 methyltransferase activating subunit (118 aa).

The residue at position 2 (Thr2) is an N-acetylthreonine. Residues 2–55 form an interaction with RNMT region; the sequence is TDTAEAVPNFEEMFASRFTENDKEYQEYLKRPPESPPIVEEWNSRAGGNQRNRG. Positions 30-118 are disordered; the sequence is LKRPPESPPI…YNQRPPYGYY (89 aa). At Ser36 the chain carries Phosphoserine. The short motif at 36–42 is the RNMT-activating domain element; sequence SPPIVEE. Over residues 45–56 the composition is skewed to low complexity; that stretch reads SRAGGNQRNRGN. Residues 56–118 form an RNA-binding region; that stretch reads NRLQDNRQFR…YNQRPPYGYY (63 aa). The span at 57–70 shows a compositional bias: basic and acidic residues; sequence RLQDNRQFRGRDNR. A compositionally biased stretch (polar residues) spans 76–93; it reads DNRSNQWHGRSWGNNYPQ. Arg85 bears the Omega-N-methylarginine mark. Ser86 is subject to Phosphoserine. The segment covering 98–109 has biased composition (low complexity); the sequence is PYYPQQYGHYGY.

This sequence belongs to the RAM family. As to quaternary structure, interacts with RNMT; this interaction enhances mRNA binding and cap methyltransferase activity.

The protein localises to the nucleus. Functionally, regulatory subunit of the mRNA-capping methyltransferase RNMT:RAMAC complex that methylates the N7 position of the added guanosine to the 5'-cap structure of mRNAs. Promotes the recruitment of the methyl donor, S-adenosyl-L-methionine, to RNMT. Regulates RNMT expression by a post-transcriptional stabilizing mechanism. Binds RNA. The polypeptide is RNA guanine-N7 methyltransferase activating subunit (RAMAC) (Pongo abelii (Sumatran orangutan)).